The following is a 214-amino-acid chain: Eukaryotic translation initiation factor 4E-1B (214 aa).

MRNA-binding positions include 53 to 54 (WQ), 99 to 100 (WE), 154 to 159 (RAKGDK), and 202 to 204 (TKS).

Ovary, muscle and testis.

Its subcellular location is the cytoplasm. The protein localises to the nucleus. Does not appear to be a mRNA-cap-binding protein. This Danio rerio (Zebrafish) protein is Eukaryotic translation initiation factor 4E-1B.